The primary structure comprises 1034 residues: Integrin alpha-V (1034 aa).

The signal sequence occupies residues 1-19 (MAALRASLLLSCALTAARA). Residues 20-978 (FNLDAERPAV…WGIQPQPMPV (959 aa)) lie on the Extracellular side of the membrane. FG-GAP repeat units lie at residues 21–86 (NLDA…RNCQ), 97–158 (DFAP…VEYA), 161–213 (RSTT…LAKY), 225–279 (QLAT…GKNM), 280–345 (SSMY…GGFQ), 346–403 (IAKL…GLNA), and 407–470 (RILE…VNPT). An N-linked (GlcNAc...) asparagine glycan is attached at Asn62. 3 cysteine pairs are disulfide-bonded: Cys77/Cys85, Cys126/Cys146, and Cys160/Cys173. 4 residues coordinate Ca(2+): Asp248, Asp252, Ile254, and Asp256. N-linked (GlcNAc...) asparagine glycans are attached at residues Asn278 and Asn284. 15 residues coordinate Ca(2+): Asp302, Asn304, Asp306, Tyr308, Asp310, Asp367, Asp369, Asp371, Phe373, Asp375, Asp431, Asp433, Asn435, Tyr437, and Asp439. Cystine bridges form between Cys479–Cys488 and Cys494–Cys551. N-linked (GlcNAc...) asparagine glycosylation is found at Asn540 and Asn601. Disulfide bonds link Cys612/Cys618 and Cys684/Cys697. Residues Asn690, Asn821, Asn837, and Asn860 are each glycosylated (N-linked (GlcNAc...) asparagine). 2 disulfides stabilise this stretch: Cys838/Cys900 and Cys890/Cys895. 4 N-linked (GlcNAc...) asparagine glycosylation sites follow: Asn931, Asn951, Asn959, and Asn966. Residues 979–1002 (PVWVIILAVLAGLLLLAVLVLVMY) traverse the membrane as a helical segment. The Cytoplasmic segment spans residues 1003–1034 (RMGFFKRVRPPQEEQEREQLQPHENGEGTSEA). A GFFKR motif motif is present at residues 1005-1009 (GFFKR). Over residues 1013–1028 (PQEEQEREQLQPHENG) the composition is skewed to basic and acidic residues. The segment at 1013–1034 (PQEEQEREQLQPHENGEGTSEA) is disordered.

Belongs to the integrin alpha chain family. As to quaternary structure, heterodimer of an alpha and a beta subunit. The alpha subunit is composed of a heavy and a light chain linked by a disulfide bond. Alpha-V (ITGAV) associates with either beta-1 (ITGB1), beta-3 (ITGB3), beta-5 (ITGB5), beta-6 (ITGB6) or beta-8 (ITGB8). Interacts with RAB25. Interacts with CIB1. Integrins ITGAV:ITGB3 and ITGAV:ITGB5 interact with FBLN5 (via N-terminus). ITGAV:ITGB3 and ITGAV:ITGB5 interact with CCN3. ITGAV:ITGB3 interacts with ADGRA2. ITGAV:ITGB3 interacts with FGF2; it is likely that FGF2 can simultaneously bind ITGAV:ITGB3 and FGF receptors. ITGAV:ITGB3 is found in a ternary complex with CX3CR1 and CX3CL1. ITGAV:ITGB3 is found in a ternary complex with NRG1 and ERBB3. ITGAV:ITGB3 is found in a ternary complex with FGF1 and FGFR1. ITGAV:ITGB3 is found in a ternary complex with IGF1 and IGF1R. ITGAV:ITGB3 interacts with IGF2. ITGAV:ITGB3 and ITGAV:ITGB6 interact with FBN1. ITGAV:ITGB3 interacts with CD9, CD81 and CD151 (via second extracellular domain). ITGAV:ITGB6 interacts with TGFB1.

It is found in the membrane. Its subcellular location is the cell junction. It localises to the focal adhesion. In terms of biological role, the alpha-V (ITGAV) integrins are receptors for vitronectin, cytotactin, fibronectin, fibrinogen, laminin, matrix metalloproteinase-2, osteopontin, osteomodulin, prothrombin, thrombospondin, TGFB1 and vWF. They recognize the sequence R-G-D in a wide array of ligands. Alpha-V integrins may play a role in embryo implantation, angiogenesis and wound healing. ITGAV:ITGB3 binds to fractalkine (CX3CL1) and may act as its coreceptor in CX3CR1-dependent fractalkine signaling. ITGAV:ITGB3 binds to NRG1 (via EGF domain) and this binding is essential for NRG1-ERBB signaling. ITGAV:ITGB3 binds to FGF1 and this binding is essential for FGF1 signaling. ITGAV:ITGB3 binds to FGF2 and this binding is essential for FGF2 signaling. ITGAV:ITGB3 binds to IGF1 and this binding is essential for IGF1 signaling. ITGAV:ITGB3 binds to IGF2 and this binding is essential for IGF2 signaling. ITGAV:ITGB3 binds to IL1B and this binding is essential for IL1B signaling. ITGAV:ITGB3 binds to PLA2G2A via a site (site 2) which is distinct from the classical ligand-binding site (site 1) and this induces integrin conformational changes and enhanced ligand binding to site 1. ITGAV:ITGB3 and ITGAV:ITGB6 act as receptors for fibrillin-1 (FBN1) and mediate R-G-D-dependent cell adhesion to FBN1. Integrin alpha-V/beta-6 or alpha-V/beta-8 (ITGAV:ITGB6 or ITGAV:ITGB8) mediates R-G-D-dependent release of transforming growth factor beta-1 (TGF-beta-1) from regulatory Latency-associated peptide (LAP), thereby playing a key role in TGF-beta-1 activation. ITGAV:ITGB3 acts as a receptor for CD40LG. ITGAV:ITGB3 acts as a receptor for IBSP and promotes cell adhesion and migration to IBSP. The chain is Integrin alpha-V (ITGAV) from Gallus gallus (Chicken).